The chain runs to 483 residues: ATP-dependent RNA helicase DDX25 (483 aa).

The short motif at 61 to 74 is the Nuclear export signal element; that stretch reads LAANSLLNKLIHQS. The short motif at 97–125 is the Q motif element; it reads KTFEELRLKEELLKGIYAMGFNRPSKIQE. Residues 100–114 carry the Nuclear localization signal motif; that stretch reads EELRLKEELLKGIYA. The 171-residue stretch at 130–300 folds into the Helicase ATP-binding domain; sequence MMLAHPPQNL…ERIIPDPNVI (171 aa). 143 to 150 lines the ATP pocket; sequence SQSGTGKT. The DEAD box signature appears at 247–250; it reads DEAD. The Helicase C-terminal domain occupies 311 to 478; that stretch reads NIRQYYVLCE…QLNAEDMDEI (168 aa).

The protein belongs to the DEAD box helicase family. Post-translationally, phosphorylated on threonine residues. The phosphorylated form is found in the cytoplasm but not in the nucleus. In terms of tissue distribution, highly expressed in the Leydig and germ cells of the testis and weakly expressed in the pituitary and hypothalamus.

It localises to the cytoplasm. Its subcellular location is the nucleus. The catalysed reaction is ATP + H2O = ADP + phosphate + H(+). Its function is as follows. ATP-dependent RNA helicase. Required for mRNA export and translation regulation during spermatid development. This chain is ATP-dependent RNA helicase DDX25 (DDX25), found in Homo sapiens (Human).